The chain runs to 411 residues: Methyl-CpG-binding domain protein 2 (411 aa).

Positions 1–149 are required for interaction with DHX9 and PRMT5; it reads MRAHPGGGRC…GPRATESGKR (149 aa). Residues 1–158 are disordered; it reads MRAHPGGGRC…RMDCPALPPG (158 aa). The span at 77–95 shows a compositional bias: basic residues; it reads GRGRGRGRGRGRGRGRGRG. Gly residues predominate over residues 98 to 121; that stretch reads PSGGSGLGGDGGGCGGGGSGGGGA. The MBD domain maps to 145–213; the sequence is ESGKRMDCPA…SSFDFRTGKM (69 aa). Ser181 carries the post-translational modification Phosphoserine. The segment at 214–241 is disordered; it reads MPSKLQKNKQRLRNDPLNQNKGKPDLNT. Positions 229-241 are enriched in polar residues; it reads PLNQNKGKPDLNT. Phosphoserine is present on Ser407.

As to quaternary structure, heterodimer with MBD3 (via N-terminus). Component of the MeCP1 complex that contains HDAC1 and HDAC2. Component of the nucleosome remodeling and deacetylase (NuRD) repressor complex, composed of core proteins MTA1, MTA2, MTA3, RBBP4, RBBP7, HDAC1, HDAC2, MBD2, MBD3, and peripherally associated proteins CDK2AP1, CDK2AP2, GATAD2A, GATAD2B, CHD3, CHD4 and CHD5. The exact stoichiometry of the NuRD complex is unknown, and some subunits such as MBD2 and MBD3, GATAD2A and GATAD2B, and CHD3, CHD4 and CHD5 define mutually exclusive NuRD complexes. Interacts with CDK2AP1. Interacts with DHX9. Interacts with DNMT1. Interacts with GATAD2A/p66-alpha. Interacts with GATAD2B/p66-beta. Interacts with GPN1. Interacts with MIZF. Interacts with PRMT5. Interacts with SIN3A. Interacts with SPHK2. In terms of tissue distribution, highly expressed in brain, heart, kidney, stomach, testis and placenta.

It is found in the nucleus. It localises to the chromosome. In terms of biological role, binds CpG islands in promoters where the DNA is methylated at position 5 of cytosine within CpG dinucleotides. Binds hemimethylated DNA as well. Recruits histone deacetylases and DNA methyltransferases to chromatin. Acts as a component of the histone deacetylase NuRD complex which participates in the remodeling of chromatin. Acts as a transcriptional repressor and plays a role in gene silencing. Functions as a scaffold protein, targeting GATAD2A and GATAD2B to chromatin to promote repression. May enhance the activation of some unmethylated cAMP-responsive promoters. The polypeptide is Methyl-CpG-binding domain protein 2 (Homo sapiens (Human)).